The sequence spans 78 residues: Small ribosomal subunit protein bS16 (78 aa).

Belongs to the bacterial ribosomal protein bS16 family.

This Thermodesulfovibrio yellowstonii (strain ATCC 51303 / DSM 11347 / YP87) protein is Small ribosomal subunit protein bS16.